The chain runs to 87 residues: Large ribosomal subunit protein bL31B (87 aa).

It belongs to the bacterial ribosomal protein bL31 family. Type B subfamily. Part of the 50S ribosomal subunit.

The protein is Large ribosomal subunit protein bL31B of Escherichia coli O8 (strain IAI1).